The sequence spans 204 residues: Proteasome subunit beta type-3 (204 aa).

It belongs to the peptidase T1B family. The 26S proteasome consists of a 20S proteasome core and two 19S regulatory subunits. The 20S proteasome core is composed of 28 subunits that are arranged in four stacked rings, resulting in a barrel-shaped structure. The two end rings are each formed by seven alpha subunits, and the two central rings are each formed by seven beta subunits. The catalytic chamber with the active sites is on the inside of the barrel.

The protein localises to the cytoplasm. Its subcellular location is the nucleus. Its function is as follows. Non-catalytic component of the proteasome, a multicatalytic proteinase complex which is characterized by its ability to cleave peptides with Arg, Phe, Tyr, Leu, and Glu adjacent to the leaving group at neutral or slightly basic pH. The proteasome has an ATP-dependent proteolytic activity. In Oryza sativa subsp. japonica (Rice), this protein is Proteasome subunit beta type-3 (PBC1).